The following is a 726-amino-acid chain: Quinolinate synthase, chloroplastic (726 aa).

Residues 1–67 (MDAANLVMKS…KKPSNNSTFT (67 aa)) constitute a chloroplast transit peptide. C133 (cysteine persulfide intermediate) is an active-site residue. Iminosuccinate-binding residues include H283 and S309. A [4Fe-4S] cluster-binding site is contributed by C363. Residues 392–394 (YIN) and S414 each bind iminosuccinate. C487 provides a ligand contact to [4Fe-4S] cluster. Iminosuccinate contacts are provided by residues 513–515 (HFE) and T538. [4Fe-4S] cluster is bound at residue C643.

This sequence belongs to the quinolinate synthase family. Type 1 subfamily. Homodimer. [4Fe-4S] cluster serves as cofactor.

It localises to the plastid. Its subcellular location is the chloroplast. The enzyme catalyses iminosuccinate + dihydroxyacetone phosphate = quinolinate + phosphate + 2 H2O + H(+). It functions in the pathway alkaloid biosynthesis; nicotine biosynthesis. It participates in cofactor biosynthesis; NAD(+) biosynthesis; quinolinate from iminoaspartate: step 1/1. Functionally, involved in the biosynthesis of pyridine alkaloid natural products, leading mainly to the production of anabasine, anatabine, nicotine and nornicotine, effective deterrents against herbivores with antiparasitic and pesticide properties (neurotoxins); nornicotine serves as the precursor in the synthesis of the carcinogen compound N'-nitrosonornicotine (NNN). Catalyzes the condensation of iminoaspartate with dihydroxyacetone phosphate to form quinolinate. The protein is Quinolinate synthase, chloroplastic of Nicotiana tabacum (Common tobacco).